The primary structure comprises 1171 residues: DNA-directed RNA polymerase subunit beta (1171 aa).

The protein belongs to the RNA polymerase beta chain family. The RNAP catalytic core consists of 2 alpha, 1 beta, 1 beta' and 1 omega subunit. When a sigma factor is associated with the core the holoenzyme is formed, which can initiate transcription.

The enzyme catalyses RNA(n) + a ribonucleoside 5'-triphosphate = RNA(n+1) + diphosphate. In terms of biological role, DNA-dependent RNA polymerase catalyzes the transcription of DNA into RNA using the four ribonucleoside triphosphates as substrates. This is DNA-directed RNA polymerase subunit beta from Kineococcus radiotolerans (strain ATCC BAA-149 / DSM 14245 / SRS30216).